We begin with the raw amino-acid sequence, 177 residues long: Isopentenyl-diphosphate Delta-isomerase 1 (177 aa).

Residues His-24 and His-30 each coordinate Mn(2+). The region spanning 28-160 is the Nudix hydrolase domain; the sequence is SLHRAISIFI…PHAYSFWLEA (133 aa). The active site involves Cys-65. Cys-65 contacts Mg(2+). Residue His-67 coordinates Mn(2+). Residue Glu-85 participates in Mg(2+) binding. Mn(2+) is bound by residues Glu-110 and Glu-112. Glu-112 is an active-site residue.

The protein belongs to the IPP isomerase type 1 family. It depends on Mg(2+) as a cofactor. Requires Mn(2+) as cofactor.

The protein localises to the cytoplasm. The enzyme catalyses isopentenyl diphosphate = dimethylallyl diphosphate. The protein operates within isoprenoid biosynthesis; dimethylallyl diphosphate biosynthesis; dimethylallyl diphosphate from isopentenyl diphosphate: step 1/1. In terms of biological role, catalyzes the 1,3-allylic rearrangement of the homoallylic substrate isopentenyl (IPP) to its highly electrophilic allylic isomer, dimethylallyl diphosphate (DMAPP). The sequence is that of Isopentenyl-diphosphate Delta-isomerase 1 from Aromatoleum aromaticum (strain DSM 19018 / LMG 30748 / EbN1) (Azoarcus sp. (strain EbN1)).